Consider the following 201-residue polypeptide: Putative lipoprotein LppC (201 aa).

The N-terminal stretch at 1 to 23 is a signal peptide; it reads MTSTLHRTPLATAGLALVVALGG. Cysteine 24 carries the N-palmitoyl cysteine lipid modification. A lipid anchor (S-diacylglycerol cysteine) is attached at cysteine 24. 3 prevents bacterial uptake by a human macrophage-like cell line regions span residues 77–96, 97–116, and 117–136; these read GANVAPPLTWSSPAGAAELA, LVVDDPDAVGGLYVHWIVTG, and IAPGSGSTADGQTPAGGHSV. The interval 122–141 is disordered; the sequence is GSTADGQTPAGGHSVPNSGG.

This sequence belongs to the UPF0098 family.

The protein resides in the cell membrane. It localises to the cell surface. Functionally, probably involved in bacterial recognition and uptake by its host (human). In Mycobacterium tuberculosis (strain ATCC 25618 / H37Rv), this protein is Putative lipoprotein LppC.